The sequence spans 235 residues: MPKLSKRLAGLASKIEDRVYEPLEAIALVKDNATAKFDETMEAHVRLGIDPKYTDQQLRTTVALPNGTGQTVRIAVVTRGEKVAEAKAAGAELAGDEDLVETIAKGEMEFDLLIATPDMMPKVAKLGRVLGPRGLMPNPKAGTVTIDLAGAIQEFKAGKLEFRADRTGIVHVRFGKASFTAEALLQNLKTLQETIDRNKPSGAKGRYWKSLYVTSTMGPSVEVDFSALQDIEQGS.

Belongs to the universal ribosomal protein uL1 family. Part of the 50S ribosomal subunit.

In terms of biological role, binds directly to 23S rRNA. The L1 stalk is quite mobile in the ribosome, and is involved in E site tRNA release. Functionally, protein L1 is also a translational repressor protein, it controls the translation of the L11 operon by binding to its mRNA. This is Large ribosomal subunit protein uL1 from Parasynechococcus marenigrum (strain WH8102).